Here is a 253-residue protein sequence, read N- to C-terminus: Indole-3-glycerol phosphate synthase (253 aa).

It belongs to the TrpC family.

The catalysed reaction is 1-(2-carboxyphenylamino)-1-deoxy-D-ribulose 5-phosphate + H(+) = (1S,2R)-1-C-(indol-3-yl)glycerol 3-phosphate + CO2 + H2O. It participates in amino-acid biosynthesis; L-tryptophan biosynthesis; L-tryptophan from chorismate: step 4/5. This is Indole-3-glycerol phosphate synthase from Bacillus cereus (strain ZK / E33L).